Reading from the N-terminus, the 129-residue chain is Glycophorin-A (129 aa).

The N-terminal stretch at Met1–Thr17 is a signal peptide. Gln18 is modified (pyrrolidone carboxylic acid). Over Gln18–Val82 the chain is Extracellular. Residues Ser29 and Ser30 are each glycosylated (O-linked (GalNAc...) serine). Thr34 carries an O-linked (GalNAc...) threonine glycan. O-linked (GalNAc...) serine glycosylation is present at Ser40. O-linked (GalNAc...) threonine glycans are attached at residues Thr41 and Thr48. Ser56 carries O-linked (GalNAc...) serine glycosylation. A helical transmembrane segment spans residues Ile83–Phe103. Residues Cys104–Leu129 are Cytoplasmic-facing.

The protein belongs to the glycophorin-A family. In terms of assembly, homodimer. Component of the ankyrin-1 complex in the erythrocyte, composed of ANK1, RHCE, RHAG, SLC4A1, EPB42, GYPA, GYPB and AQP1. Interacts with SLC4A1; a GYPA monomer is bound at each end of the SLC4A1 dimer forming a heterotetramer.

It is found in the membrane. Its function is as follows. Component of the ankyrin-1 complex, a multiprotein complex involved in the stability and shape of the erythrocyte membrane. Glycophorin A is the major intrinsic membrane protein of the erythrocyte. The N-terminal glycosylated segment, which lies outside the erythrocyte membrane, has MN blood group receptors. Appears to be important for the function of SLC4A1 and is required for high activity of SLC4A1. May be involved in translocation of SLC4A1 to the plasma membrane. This Canis lupus familiaris (Dog) protein is Glycophorin-A.